Reading from the N-terminus, the 159-residue chain is MASVPHFTVFLFLACALGIGANVTRRATSSCPKGWTHHGSRCFTFHRGSMDWASAEAACIRKGGNLASIHNRREQNFITHLIHKLSGENRRTWIGGNDAVKEGMWFWSDGSKFNYKGWKKGQPDKHVPAEHCAETNFKGAFWNNALCKVKRSFLCAKNL.

Residues 1-21 form the signal peptide; the sequence is MASVPHFTVFLFLACALGIGA. Positions 22–24 are excised as a propeptide; that stretch reads NVT. 3 disulfides stabilise this stretch: Cys-31–Cys-42, Cys-59–Cys-155, and Cys-132–Cys-147. One can recognise a C-type lectin domain in the interval 38-156; it reads HGSRCFTFHR…CKVKRSFLCA (119 aa). Residues Gln-122, Asp-124, Glu-130, and Asn-143 each contribute to the Ca(2+) site. A Galactose-binding motif is present at residues 122-124; the sequence is QPD.

In terms of assembly, monomer. Post-translationally, not glycosylated. As to expression, expressed by the venom gland.

It is found in the secreted. Galactose specific lectin that exhibits hemagglutination activity (minimum hemagluttination concentration = 2.5 ug/well) in a calcium-independent fashion. Has remarkable pro-inflammatory activity, inducing neutrophil mobilization in mice. Plays a crucial role in the innate immune system and chronic manifestations, especially in neutrophil mobilization. The sequence is that of Galactose-specific lectin nattectin from Thalassophryne nattereri (Copper Joe toadfish).